The following is a 1184-amino-acid chain: Calcium-activated potassium channel subunit alpha-1a (1184 aa).

Over 1–39 the chain is Extracellular; the sequence is MSNNINFNKNPDSSVSISKMDVIIPFTPDVPCDNNGQRM. The helical transmembrane segment at 40-60 threads the bilayer; that stretch reads WWAFLASSMVTFFGGLFIILL. Residues 61 to 132 are Cytoplasmic-facing; it reads WRTLKYLWTV…MISAQTLTGR (72 aa). S-palmitoyl cysteine attachment occurs at residues Cys71, Cys72, and Cys74. A helical membrane pass occupies residues 133–153; sequence VLVVLVFALSIGALGIYFIDS. The Extracellular portion of the chain corresponds to 154 to 168; the sequence is SDPIESCQNFYKDFT. The helical transmembrane segment at 169 to 189 threads the bilayer; sequence LQIDMAFNVFFLLYFGLRFIA. The Cytoplasmic portion of the chain corresponds to 190–193; the sequence is ANDK. A helical transmembrane segment spans residues 194-214; sequence LWFWLEVNSVVDFFTVPPVFV. Over 215 to 254 the chain is Extracellular; it reads SVYLNRSWLGLRFLRALRLIQFSEILQFLNILKTSNSIKL. Residues 255 to 275 form a helical membrane-spanning segment; it reads VNLCSIFISTWLTAAGFIHLV. Over 276 to 289 the chain is Cytoplasmic; sequence ENSGDPWENFQNSQ. A helical transmembrane segment spans residues 290–310; the sequence is PLSYWECVYLLMVTMSTVGYG. The Extracellular portion of the chain corresponds to 311–321; it reads DVYARTTLGRL. A helical transmembrane segment spans residues 322–342; the sequence is FMVFFILGGLAMFASYVPEII. Over 343 to 1184 the chain is Cytoplasmic; sequence ELIGNRKKYG…PPIREVEDEC (842 aa). In terms of domain architecture, RCK N-terminal 1 spans 361–503; the sequence is RKHIVVCGHI…WNWKEGDDAI (143 aa). Glu393, Gln416, and Glu418 together coordinate Mg(2+). Asn468 serves as a coordination point for Ca(2+). The disordered stretch occupies residues 655–677; it reads EHPSTLSPKKKQRNGGMRNSPNC. Thr659 carries the phosphothreonine modification. Ser661, Ser674, and Ser678 each carry phosphoserine. One can recognise an RCK N-terminal 2 domain in the interval 735-879; it reads SGHVVVCIFG…MDRSSPDNSP (145 aa). Thr866 carries the phosphothreonine modification. Phosphoserine occurs at positions 874 and 878. Ca(2+) contacts are provided by Gln908, Asp911, Asp914, and Asp916. The Calcium bowl signature appears at 908–916; the sequence is QFLDQDDDD. A disordered region spans residues 1082–1143; that stretch reads RASLSHSSHS…PEKRWFTDEA (62 aa). Residues 1084-1104 are compositionally biased toward low complexity; it reads SLSHSSHSSHSSSKKSSSVHS. The segment covering 1116–1125 has biased composition (basic and acidic residues); sequence KAREARDKQN.

It belongs to the potassium channel family. Calcium-activated (TC 1.A.1.3) subfamily. KCa1.1/KCNMA1 sub-subfamily. Homotetramer; which constitutes the calcium-activated potassium channel. Phosphorylated. Post-translationally, palmitoylated.

The protein resides in the cell membrane. It catalyses the reaction K(+)(in) = K(+)(out). Potassium channel activated by both membrane depolarization or increase in cytosolic Ca(2+) that mediates export of K(+). It is also activated by the concentration of cytosolic Mg(2+). Its activation dampens the excitatory events that elevate the cytosolic Ca(2+) concentration and/or depolarize the cell membrane. It therefore contributes to repolarization of the membrane potential. Involved in determining peripheral auditory sensitivity. The protein is Calcium-activated potassium channel subunit alpha-1a of Danio rerio (Zebrafish).